Here is a 35-residue protein sequence, read N- to C-terminus: Conotoxin TxMEKL-0422 (35 aa).

The segment at 1 to 35 (NPASCCSCADVDPGRASRKTPKGEDQVFIKEKDRC) is disordered. Basic and acidic residues predominate over residues 21–35 (PKGEDQVFIKEKDRC).

Contains disulfide bonds. In terms of tissue distribution, expressed by the venom duct.

It is found in the secreted. This chain is Conotoxin TxMEKL-0422, found in Conus textile (Cloth-of-gold cone).